The sequence spans 481 residues: Protein nucleotidyltransferase YdiU (481 aa).

The ATP site is built by glycine 87, glycine 89, arginine 90, lysine 110, aspartate 122, glycine 123, arginine 173, and arginine 180. The active-site Proton acceptor is the aspartate 249. Mg(2+) is bound by residues asparagine 250 and aspartate 259. Aspartate 259 is an ATP binding site.

This sequence belongs to the SELO family. Mg(2+) is required as a cofactor. It depends on Mn(2+) as a cofactor.

It carries out the reaction L-seryl-[protein] + ATP = 3-O-(5'-adenylyl)-L-seryl-[protein] + diphosphate. The catalysed reaction is L-threonyl-[protein] + ATP = 3-O-(5'-adenylyl)-L-threonyl-[protein] + diphosphate. The enzyme catalyses L-tyrosyl-[protein] + ATP = O-(5'-adenylyl)-L-tyrosyl-[protein] + diphosphate. It catalyses the reaction L-histidyl-[protein] + UTP = N(tele)-(5'-uridylyl)-L-histidyl-[protein] + diphosphate. It carries out the reaction L-seryl-[protein] + UTP = O-(5'-uridylyl)-L-seryl-[protein] + diphosphate. The catalysed reaction is L-tyrosyl-[protein] + UTP = O-(5'-uridylyl)-L-tyrosyl-[protein] + diphosphate. Functionally, nucleotidyltransferase involved in the post-translational modification of proteins. It can catalyze the addition of adenosine monophosphate (AMP) or uridine monophosphate (UMP) to a protein, resulting in modifications known as AMPylation and UMPylation. This chain is Protein nucleotidyltransferase YdiU, found in Mycobacterium sp. (strain KMS).